The primary structure comprises 712 residues: Ferric reductase transmembrane component 6 (712 aa).

The first 17 residues, 1–17 (MHRTLLFLTWLISLTKA), serve as a signal peptide directing secretion. Residues 18-167 (FNIKLPHTEK…HAHAYNLDIS (150 aa)) lie on the Vacuolar side of the membrane. N-linked (GlcNAc...) asparagine glycans are attached at residues Asn-89, Asn-112, and Asn-124. A helical membrane pass occupies residues 168–188 (SVYGAYLTYYFVIVGIIAVFF). The Cytoplasmic portion of the chain corresponds to 189–244 (HMSHYNGLNRALFASRFVNYIRGHFVLPTFLVDKHANHFKFLNVEVFTGLMPNSLE). A helical membrane pass occupies residues 245 to 265 (AWIIFGYTLANIIFLSISYII). At 266-287 (DPYNLIFNSHLSQFTRLLADRS) the chain is on the vacuolar side. Residues 287-411 (SGILAFTQFP…YCCWQHVKIF (125 aa)) enclose the Ferric oxidoreductase domain. The helical transmembrane segment at 288–308 (GILAFTQFPLIIIFTARNSFL) threads the bilayer. Residues 309 to 328 (EFLTGVKFNSFISFHKWIGR) are Cytoplasmic-facing. Heme-binding residues include His-323 and His-337. The chain crosses the membrane as a helical span at residues 329–349 (IMVLNATIHSLSYSLFAIINH). The Vacuolar portion of the chain corresponds to 350–360 (AFKISNKQLYW). A helical membrane pass occupies residues 361 to 381 (KFGIASITVLCVLLVLSLGIV). Over 382 to 387 (RKRHYE) the chain is Cytoplasmic. A helical membrane pass occupies residues 388–408 (FFLYTHIILALLFFYCCWQHV). His-393 and His-407 together coordinate heme. At 409–416 (KIFNGWKE) the chain is on the vacuolar side. One can recognise an FAD-binding FR-type domain in the interval 412–546 (NGWKEWIVVS…EGPYGPSNLH (135 aa)). A helical transmembrane segment spans residues 417–437 (WIVVSLLIWGLEKLFRIWNIL). Topologically, residues 438 to 712 (QFRFPKATLI…IEYFEEYQCW (275 aa)) are cytoplasmic. 493-499 (HPFTIID) contributes to the FAD binding site. NADP(+) contacts are provided by residues 538-541 (GPYG) and 678-679 (CG).

This sequence belongs to the ferric reductase (FRE) family. Requires FAD as cofactor.

The protein localises to the vacuole membrane. The catalysed reaction is 2 a Fe(II)-siderophore + NADP(+) + H(+) = 2 a Fe(III)-siderophore + NADPH. Functionally, metalloreductase responsible for reducing vacuolar iron and copper prior to transport into the cytosol. Catalyzes the reduction of Fe(3+) to Fe(2+) and Cu(2+) to Cu(+), respectively, which can then be transported by the respective vacuolar efflux systems to the cytosol. The chain is Ferric reductase transmembrane component 6 (FRE6) from Saccharomyces cerevisiae (strain ATCC 204508 / S288c) (Baker's yeast).